The chain runs to 370 residues: 4-hydroxy-3-methylbut-2-en-1-yl diphosphate synthase (flavodoxin) (370 aa).

Positions 270, 273, 305, and 312 each coordinate [4Fe-4S] cluster.

This sequence belongs to the IspG family. [4Fe-4S] cluster is required as a cofactor.

It carries out the reaction (2E)-4-hydroxy-3-methylbut-2-enyl diphosphate + oxidized [flavodoxin] + H2O + 2 H(+) = 2-C-methyl-D-erythritol 2,4-cyclic diphosphate + reduced [flavodoxin]. Its pathway is isoprenoid biosynthesis; isopentenyl diphosphate biosynthesis via DXP pathway; isopentenyl diphosphate from 1-deoxy-D-xylulose 5-phosphate: step 5/6. Its function is as follows. Converts 2C-methyl-D-erythritol 2,4-cyclodiphosphate (ME-2,4cPP) into 1-hydroxy-2-methyl-2-(E)-butenyl 4-diphosphate. The polypeptide is 4-hydroxy-3-methylbut-2-en-1-yl diphosphate synthase (flavodoxin) (Azotobacter vinelandii (strain DJ / ATCC BAA-1303)).